A 411-amino-acid polypeptide reads, in one-letter code: L-cysteine:1D-myo-inositol 2-amino-2-deoxy-alpha-D-glucopyranoside ligase (411 aa).

Cys43 contacts Zn(2+). L-cysteinyl-5'-AMP-binding positions include 43-46 (CGIT), Thr58, and 81-83 (NVT). A 'HIGH' region motif is present at residues 45–55 (ITPYDATHLGH). Positions 186 to 191 (QRGGDP) match the 'ERGGDP' region motif. An L-cysteinyl-5'-AMP-binding site is contributed by Trp226. Cys230 contacts Zn(2+). 248–250 (GSD) contacts L-cysteinyl-5'-AMP. His255 contributes to the Zn(2+) binding site. Position 282 (Ile282) interacts with L-cysteinyl-5'-AMP. Residues 288–292 (KMSKS) carry the 'KMSKS' region motif.

It belongs to the class-I aminoacyl-tRNA synthetase family. MshC subfamily. In terms of assembly, monomer. Zn(2+) is required as a cofactor.

It carries out the reaction 1D-myo-inositol 2-amino-2-deoxy-alpha-D-glucopyranoside + L-cysteine + ATP = 1D-myo-inositol 2-(L-cysteinylamino)-2-deoxy-alpha-D-glucopyranoside + AMP + diphosphate + H(+). Its function is as follows. Catalyzes the ATP-dependent condensation of GlcN-Ins and L-cysteine to form L-Cys-GlcN-Ins. The polypeptide is L-cysteine:1D-myo-inositol 2-amino-2-deoxy-alpha-D-glucopyranoside ligase (Mycobacterium ulcerans (strain Agy99)).